The chain runs to 85 residues: Large ribosomal subunit protein bL27 (85 aa).

Residues 1–21 are disordered; it reads MAHKKGGGSTHNGRDSKPKML.

Belongs to the bacterial ribosomal protein bL27 family.

In Albidiferax ferrireducens (strain ATCC BAA-621 / DSM 15236 / T118) (Rhodoferax ferrireducens), this protein is Large ribosomal subunit protein bL27.